A 1081-amino-acid chain; its full sequence is Importin-4 (1081 aa).

M1 bears the N-acetylmethionine mark. Residues 24-90 (ATEQLQIVLR…KSLILTALQR (67 aa)) form the Importin N-terminal domain. HEAT repeat units follow at residues 348–385 (KLCP…GAGD), 390–427 (RLLP…NLQP), 431–471 (SYSR…NLGP), 475–513 (PYLP…AAQA), 895–932 (QFVS…HGGH), and 936–974 (EHFP…ASPT).

The protein belongs to the importin beta family. In terms of assembly, found in a cytosolic complex with ASF1 (ASF1A or ASF1B) and histones H3 and H4.

It is found in the cytoplasm. The protein localises to the nucleus. Nuclear transport receptor that mediates nuclear import of proteins, such as histones, RPS3A, TNP2 and VDR. Serves as receptor for nuclear localization signals (NLS) in cargo substrates. Is thought to mediate docking of the importin/substrate complex to the nuclear pore complex (NPC) through binding to nucleoporin and the complex is subsequently translocated through the pore by an energy requiring, Ran-dependent mechanism. At the nucleoplasmic side of the NPC, Ran binds to the importin, the importin/substrate complex dissociates and importin is re-exported from the nucleus to the cytoplasm where GTP hydrolysis releases Ran. The directionality of nuclear import is thought to be conferred by an asymmetric distribution of the GTP- and GDP-bound forms of Ran between the cytoplasm and nucleus. Mediates the nuclear import of the histone H3-H4 dimer when in complex with ASF1 (ASF1A or ASF1B). Mediates the ligand-independent nuclear import of vitamin D receptor (VDR). In vitro, mediates the nuclear import of human cytomegalovirus UL84 by recognizing a non-classical NLS. The chain is Importin-4 (IPO4) from Homo sapiens (Human).